Consider the following 362-residue polypeptide: Histidinol-phosphate aminotransferase (362 aa).

Lys220 carries the N6-(pyridoxal phosphate)lysine modification.

This sequence belongs to the class-II pyridoxal-phosphate-dependent aminotransferase family. Histidinol-phosphate aminotransferase subfamily. Homodimer. Requires pyridoxal 5'-phosphate as cofactor.

The enzyme catalyses L-histidinol phosphate + 2-oxoglutarate = 3-(imidazol-4-yl)-2-oxopropyl phosphate + L-glutamate. The protein operates within amino-acid biosynthesis; L-histidine biosynthesis; L-histidine from 5-phospho-alpha-D-ribose 1-diphosphate: step 7/9. This Rhodospirillum centenum (strain ATCC 51521 / SW) protein is Histidinol-phosphate aminotransferase.